The chain runs to 130 residues: Methylglyoxal synthase (130 aa).

The MGS-like domain maps to 1-130 (MSTPRIALIA…DLARRLTANA (130 aa)). Substrate contacts are provided by residues H11, K15, 37-40 (TGTT), and 57-58 (SG). The active-site Proton donor/acceptor is D63. H90 is a binding site for substrate.

The protein belongs to the methylglyoxal synthase family.

The catalysed reaction is dihydroxyacetone phosphate = methylglyoxal + phosphate. In terms of biological role, catalyzes the formation of methylglyoxal from dihydroxyacetone phosphate. This is Methylglyoxal synthase from Burkholderia mallei (strain NCTC 10247).